The following is an 853-amino-acid chain: Probable inorganic carbon transporter subunit DabA (853 aa).

The disordered stretch occupies residues 1 to 21; it reads MSHANSEETMMNTAVAHPSTS. The span at 7-21 shows a compositional bias: polar residues; the sequence is EETMMNTAVAHPSTS. Zn(2+)-binding residues include Cys-364, Asp-366, His-546, and Cys-561.

Belongs to the inorganic carbon transporter (TC 9.A.2) DabA family. Forms a complex with DabB. Requires Zn(2+) as cofactor.

Its subcellular location is the cell inner membrane. Functionally, part of an energy-coupled inorganic carbon pump. This Methylovorus glucosotrophus (strain SIP3-4) protein is Probable inorganic carbon transporter subunit DabA.